A 474-amino-acid polypeptide reads, in one-letter code: Glutamate--tRNA ligase 1 (474 aa).

The short motif at 10–20 is the 'HIGH' region element; it reads PSPTGFLHIGG. Residues 239 to 243 carry the 'KMSKS' region motif; the sequence is KLSKR. K242 contributes to the ATP binding site.

Belongs to the class-I aminoacyl-tRNA synthetase family. Glutamate--tRNA ligase type 1 subfamily. As to quaternary structure, monomer.

The protein localises to the cytoplasm. The catalysed reaction is tRNA(Glu) + L-glutamate + ATP = L-glutamyl-tRNA(Glu) + AMP + diphosphate. Functionally, catalyzes the attachment of glutamate to tRNA(Glu) in a two-step reaction: glutamate is first activated by ATP to form Glu-AMP and then transferred to the acceptor end of tRNA(Glu). This is Glutamate--tRNA ligase 1 from Methylobacterium sp. (strain 4-46).